We begin with the raw amino-acid sequence, 214 residues long: Thiamine-phosphate synthase (214 aa).

4-amino-2-methyl-5-(diphosphooxymethyl)pyrimidine is bound by residues 38-42 and Asn70; that span reads QLREK. 2 residues coordinate Mg(2+): Asp71 and Asp90. The 4-amino-2-methyl-5-(diphosphooxymethyl)pyrimidine site is built by Ser109 and Lys138. Gly165 contributes to the 2-[(2R,5Z)-2-carboxy-4-methylthiazol-5(2H)-ylidene]ethyl phosphate binding site.

It belongs to the thiamine-phosphate synthase family. Mg(2+) serves as cofactor.

The enzyme catalyses 2-[(2R,5Z)-2-carboxy-4-methylthiazol-5(2H)-ylidene]ethyl phosphate + 4-amino-2-methyl-5-(diphosphooxymethyl)pyrimidine + 2 H(+) = thiamine phosphate + CO2 + diphosphate. It carries out the reaction 2-(2-carboxy-4-methylthiazol-5-yl)ethyl phosphate + 4-amino-2-methyl-5-(diphosphooxymethyl)pyrimidine + 2 H(+) = thiamine phosphate + CO2 + diphosphate. The catalysed reaction is 4-methyl-5-(2-phosphooxyethyl)-thiazole + 4-amino-2-methyl-5-(diphosphooxymethyl)pyrimidine + H(+) = thiamine phosphate + diphosphate. The protein operates within cofactor biosynthesis; thiamine diphosphate biosynthesis; thiamine phosphate from 4-amino-2-methyl-5-diphosphomethylpyrimidine and 4-methyl-5-(2-phosphoethyl)-thiazole: step 1/1. Its function is as follows. Condenses 4-methyl-5-(beta-hydroxyethyl)thiazole monophosphate (THZ-P) and 2-methyl-4-amino-5-hydroxymethyl pyrimidine pyrophosphate (HMP-PP) to form thiamine monophosphate (TMP). This Caldanaerobacter subterraneus subsp. tengcongensis (strain DSM 15242 / JCM 11007 / NBRC 100824 / MB4) (Thermoanaerobacter tengcongensis) protein is Thiamine-phosphate synthase.